The primary structure comprises 213 residues: Histone H1.1 (213 aa).

The segment at 1 to 43 (MSETAPVAQAASTATEKPAAAKKTKKPAKAAAPRKKPAGPSVS) is disordered. S2 is subject to N-acetylserine. S2 and S12 each carry phosphoserine. Over residues 8–18 (AQAASTATEKP) the composition is skewed to low complexity. K17 is modified (N6-acetyllysine). The span at 20–37 (AAKKTKKPAKAAAPRKKP) shows a compositional bias: basic residues. K36 carries the post-translational modification N6-(beta-hydroxybutyryl)lysine. In terms of domain architecture, H15 spans 38-111 (AGPSVSELIV…GAAGSFKLNK (74 aa)). Residue S43 is modified to Phosphoserine. N6-(beta-hydroxybutyryl)lysine is present on K54. R56 is subject to Citrulline. K66 is subject to N6-(beta-hydroxybutyryl)lysine. S67 carries the phosphoserine modification. At K77 the chain carries N6-acetyllysine. Position 87 is an N6-(beta-hydroxybutyryl)lysine (K87). An N6-(beta-hydroxybutyryl)lysine; alternate modification is found at K92. K92 is modified (N6-acetyllysine; alternate). S106 bears the Phosphoserine mark. K108 bears the N6-(beta-hydroxybutyryl)lysine mark. Residues 112–213 (KAESKAITTK…KPKKAAPKKK (102 aa)) are disordered. Positions 120 to 144 (TKVSVKAKASGAAKKPKKTAGAAAK) are enriched in low complexity. K121 bears the N6-acetyllysine mark. Basic residues-rich tracts occupy residues 145 to 178 (KTVKTPKKPKKPAVSKKTSKSPKKPKVVKAKKVA) and 185 to 213 (KAVKPKASKAKVTKPKTPAKPKKAAPKKK). At T201 the chain carries Phosphothreonine.

The protein belongs to the histone H1/H5 family. Interacts with DFFB. H1 histones are progressively phosphorylated during the cell cycle, becoming maximally phosphorylated during late G2 phase and M phase, and being dephosphorylated sharply thereafter. Post-translationally, citrullination at Arg-56 (H1R54ci) by PADI4 takes place within the DNA-binding site of H1 and results in its displacement from chromatin and global chromatin decondensation, thereby promoting pluripotency and stem cell maintenance. In terms of processing, hydroxybutyrylation of histones is induced by starvation. Restricted to thymus, testis and spleen. Present also in lymphocytic and neuronal cells. Increases in testis starting with a low level at day 5 and reaching high concentrations in 20-day old and adult animals.

It localises to the nucleus. Its subcellular location is the chromosome. In terms of biological role, histone H1 protein binds to linker DNA between nucleosomes forming the macromolecular structure known as the chromatin fiber. Histones H1 are necessary for the condensation of nucleosome chains into higher-order structured fibers. Also acts as a regulator of individual gene transcription through chromatin remodeling, nucleosome spacing and DNA methylation. The polypeptide is Histone H1.1 (Mus musculus (Mouse)).